The sequence spans 133 residues: Putative HTH-type transcriptional regulator YwnA (133 aa).

In terms of domain architecture, HTH rrf2-type spans 1–130 (MINSRLAVAI…ASKSLKDVMN (130 aa)). Positions 24–47 (SEIIADSVNTNPVVVRRMISLLKK) form a DNA-binding region, H-T-H motif.

The sequence is that of Putative HTH-type transcriptional regulator YwnA (ywnA) from Bacillus subtilis (strain 168).